Here is an 863-residue protein sequence, read N- to C-terminus: Penicillin-binding protein 1A (863 aa).

Residues 1–28 are Cytoplasmic-facing; that stretch reads MTENRDNKTSQSEKTTQKKKKKKFKAFK. Residues 29-49 traverse the membrane as a helical; Signal-anchor for type II membrane protein segment; sequence IILITFITLIVISLVTAIGIT. The Extracellular segment spans residues 50 to 863; sequence LAIIKTSPDI…KPIIRPKKHF (814 aa). The tract at residues 71–248 is transglycosylase; that stretch reads SKIYDDKGEL…PSVYYPYSRT (178 aa). Glutamate 110 functions as the Proton donor; for transglycosylase activity in the catalytic mechanism. The tract at residues 392 to 674 is transpeptidase; the sequence is ASAVLTDYHT…AAALFGKIMN (283 aa). The active-site Acyl-ester intermediate; for transpeptidase activity is serine 431. The disordered stretch occupies residues 774-863; it reads DDDMYVLPDK…KPIIRPKKHF (90 aa). The segment covering 808–836 has biased composition (polar residues); the sequence is EDATNEASTEPSPNTDTVPEDSTNNLDPT. Residues 837–846 show a composition bias toward basic and acidic residues; sequence KNTEKKPSDK. Residues 847–863 show a composition bias toward basic residues; that stretch reads KNKKHVIKPIIRPKKHF.

It in the N-terminal section; belongs to the glycosyltransferase 51 family. In the C-terminal section; belongs to the transpeptidase family.

It is found in the cell membrane. It catalyses the reaction [GlcNAc-(1-&gt;4)-Mur2Ac(oyl-L-Ala-gamma-D-Glu-L-Lys-D-Ala-D-Ala)](n)-di-trans,octa-cis-undecaprenyl diphosphate + beta-D-GlcNAc-(1-&gt;4)-Mur2Ac(oyl-L-Ala-gamma-D-Glu-L-Lys-D-Ala-D-Ala)-di-trans,octa-cis-undecaprenyl diphosphate = [GlcNAc-(1-&gt;4)-Mur2Ac(oyl-L-Ala-gamma-D-Glu-L-Lys-D-Ala-D-Ala)](n+1)-di-trans,octa-cis-undecaprenyl diphosphate + di-trans,octa-cis-undecaprenyl diphosphate + H(+). The catalysed reaction is Preferential cleavage: (Ac)2-L-Lys-D-Ala-|-D-Ala. Also transpeptidation of peptidyl-alanyl moieties that are N-acyl substituents of D-alanine.. It functions in the pathway cell wall biogenesis; peptidoglycan biosynthesis. Its function is as follows. Cell wall formation. Synthesis of cross-linked peptidoglycan from the lipid intermediates. The enzyme has a penicillin-insensitive transglycosylase N-terminal domain (formation of linear glycan strands) and a penicillin-sensitive transpeptidase C-terminal domain (cross-linking of the peptide subunits). In Clostridium novyi (strain NT), this protein is Penicillin-binding protein 1A (pbpA).